The primary structure comprises 122 residues: Large ribosomal subunit protein uL18 (122 aa).

Residues 1–26 (MSNLSRKQQTQKRHRRLRRHLKGTAQ) form a disordered region. Over residues 9 to 22 (QTQKRHRRLRRHLK) the composition is skewed to basic residues.

This sequence belongs to the universal ribosomal protein uL18 family. As to quaternary structure, part of the 50S ribosomal subunit; part of the 5S rRNA/L5/L18/L25 subcomplex. Contacts the 5S and 23S rRNAs.

This is one of the proteins that bind and probably mediate the attachment of the 5S RNA into the large ribosomal subunit, where it forms part of the central protuberance. This is Large ribosomal subunit protein uL18 from Prochlorococcus marinus (strain MIT 9313).